Consider the following 167-residue polypeptide: Small ribosomal subunit protein uS5 (167 aa).

An S5 DRBM domain is found at 11–74; that stretch reads LQEKLIAVNR…EKARRNMINV (64 aa).

The protein belongs to the universal ribosomal protein uS5 family. In terms of assembly, part of the 30S ribosomal subunit. Contacts proteins S4 and S8.

With S4 and S12 plays an important role in translational accuracy. Functionally, located at the back of the 30S subunit body where it stabilizes the conformation of the head with respect to the body. This is Small ribosomal subunit protein uS5 from Klebsiella pneumoniae subsp. pneumoniae (strain ATCC 700721 / MGH 78578).